The following is a 367-amino-acid chain: Undecaprenyl-phosphate alpha-N-acetylglucosaminyl 1-phosphate transferase (367 aa).

Helical transmembrane passes span 3–23 (LLTA…FIFL), 45–65 (GVIP…MFGL), 69–89 (YIPH…VGAM), 129–149 (WELV…WAAI), 158–178 (IDGL…LILW), 187–207 (MWCF…LGIL), 213–233 (VFMG…LLLE), 242–262 (ISPV…VAIM), and 318–338 (VPEW…GYCI).

The protein belongs to the glycosyltransferase 4 family. WecA subfamily. The cofactor is Mg(2+). Requires Mn(2+) as cofactor.

It is found in the cell inner membrane. The catalysed reaction is di-trans,octa-cis-undecaprenyl phosphate + UDP-N-acetyl-alpha-D-glucosamine = N-acetyl-alpha-D-glucosaminyl-di-trans,octa-cis-undecaprenyl diphosphate + UMP. It participates in bacterial outer membrane biogenesis; LPS O-antigen biosynthesis. The protein operates within bacterial outer membrane biogenesis; enterobacterial common antigen biosynthesis. In terms of biological role, catalyzes the transfer of the GlcNAc-1-phosphate moiety from UDP-GlcNAc onto the carrier lipid undecaprenyl phosphate (C55-P), yielding GlcNAc-pyrophosphoryl-undecaprenyl (GlcNAc-PP-C55). This chain is Undecaprenyl-phosphate alpha-N-acetylglucosaminyl 1-phosphate transferase, found in Salmonella typhi.